A 226-amino-acid polypeptide reads, in one-letter code: UPF0173 metal-dependent hydrolase GFO_2312 (226 aa).

This sequence belongs to the UPF0173 family.

This chain is UPF0173 metal-dependent hydrolase GFO_2312, found in Christiangramia forsetii (strain DSM 17595 / CGMCC 1.15422 / KT0803) (Gramella forsetii).